A 261-amino-acid chain; its full sequence is 5'-nucleotidase SurE (261 aa).

Residues Asp8, Asp9, Ser40, and Asn94 each coordinate a divalent metal cation.

This sequence belongs to the SurE nucleotidase family. A divalent metal cation serves as cofactor.

It is found in the cytoplasm. It catalyses the reaction a ribonucleoside 5'-phosphate + H2O = a ribonucleoside + phosphate. Its function is as follows. Nucleotidase that shows phosphatase activity on nucleoside 5'-monophosphates. The chain is 5'-nucleotidase SurE from Anaplasma marginale (strain St. Maries).